The sequence spans 351 residues: Phospho-N-acetylmuramoyl-pentapeptide-transferase (351 aa).

10 helical membrane passes run 17-37 (MAYATIFAFLLSLIIGPHIIL), 62-82 (GIPTMGGILIFFCVFISLVFW), 85-105 (ILNVYFLIMLFVMLGFAFLGF), 124-144 (FKIYGQIIFSFISVGTLYYFG), 161-181 (IDLGLFYIPFGMFILISASNS), 190-210 (GLAIGLSIVITGALIIIAYLT), 230-250 (LVIFLGALLGGSFGFLWFNAY), 254-274 (IMMGDTGSLALGAILGMAALI), 279-299 (ILFSILAGVFIIETMSVIIQV), and 328-348 (QVVIRFWIIGLIFAIIALSTI).

Belongs to the glycosyltransferase 4 family. MraY subfamily. Mg(2+) serves as cofactor.

The protein resides in the cell inner membrane. It carries out the reaction UDP-N-acetyl-alpha-D-muramoyl-L-alanyl-gamma-D-glutamyl-meso-2,6-diaminopimeloyl-D-alanyl-D-alanine + di-trans,octa-cis-undecaprenyl phosphate = di-trans,octa-cis-undecaprenyl diphospho-N-acetyl-alpha-D-muramoyl-L-alanyl-D-glutamyl-meso-2,6-diaminopimeloyl-D-alanyl-D-alanine + UMP. Its pathway is cell wall biogenesis; peptidoglycan biosynthesis. In terms of biological role, catalyzes the initial step of the lipid cycle reactions in the biosynthesis of the cell wall peptidoglycan: transfers peptidoglycan precursor phospho-MurNAc-pentapeptide from UDP-MurNAc-pentapeptide onto the lipid carrier undecaprenyl phosphate, yielding undecaprenyl-pyrophosphoryl-MurNAc-pentapeptide, known as lipid I. The polypeptide is Phospho-N-acetylmuramoyl-pentapeptide-transferase (Borrelia garinii subsp. bavariensis (strain ATCC BAA-2496 / DSM 23469 / PBi) (Borreliella bavariensis)).